The sequence spans 92 residues: YcgL domain-containing protein PBPRA1080 (92 aa).

In terms of domain architecture, YcgL spans 1–84 (MLCSIYKSSK…PVTNLLHQYK (84 aa)).

This is YcgL domain-containing protein PBPRA1080 from Photobacterium profundum (strain SS9).